Consider the following 551-residue polypeptide: Palmdelphin (551 aa).

Met1 carries the post-translational modification N-acetylmethionine. Residues 2–106 (EEAELVKERL…LQISTNEEAI (105 aa)) are a coiled coil. Residue Lys125 forms a Glycyl lysine isopeptide (Lys-Gly) (interchain with G-Cter in SUMO2) linkage. Position 135 is a phosphoserine (Ser135). Residue Lys179 forms a Glycyl lysine isopeptide (Lys-Gly) (interchain with G-Cter in SUMO1); alternate linkage. Lys179 is covalently cross-linked (Glycyl lysine isopeptide (Lys-Gly) (interchain with G-Cter in SUMO2); alternate). A compositionally biased stretch (basic and acidic residues) spans 247–259 (SERNSKSPTEYHD). 2 disordered regions span residues 247–393 (SERN…EDEE) and 450–529 (EEEE…IAGD). Position 271 is a phosphothreonine (Thr271). 4 positions are modified to phosphoserine: Ser321, Ser370, Ser384, and Ser385. Residues 484 to 495 (KRAEVNPHENTN) are compositionally biased toward basic and acidic residues. A phosphoserine mark is found at Ser498, Ser515, and Ser520.

Belongs to the paralemmin family. In terms of assembly, interacts with GLUL. Cell projection, dendrite. Cell projection, dendritic spine. Post-translationally, phosphorylated.

The protein resides in the cytoplasm. It is found in the cell projection. The protein localises to the dendrite. Its subcellular location is the dendritic spine. The sequence is that of Palmdelphin (PALMD) from Sus scrofa (Pig).